Here is a 417-residue protein sequence, read N- to C-terminus: L-rhamnose isomerase (417 aa).

The Mn(2+) site is built by His260, Asp292, and Asp294.

Belongs to the rhamnose isomerase family. Mn(2+) serves as cofactor.

The protein localises to the cytoplasm. The catalysed reaction is L-rhamnopyranose = L-rhamnulose. It functions in the pathway carbohydrate degradation; L-rhamnose degradation; glycerone phosphate from L-rhamnose: step 1/3. Its function is as follows. Catalyzes the interconversion of L-rhamnose and L-rhamnulose. The chain is L-rhamnose isomerase from Mannheimia succiniciproducens (strain KCTC 0769BP / MBEL55E).